Reading from the N-terminus, the 141-residue chain is Vesicle-associated membrane protein 4 (141 aa).

A disordered region spans residues 1–51 (MPPKFKRHLNDDDVTGSVKSERRNLLEDDSDEEEDFFLRGPSGPRFGPRND). Over 1 to 118 (MPPKFKRHLN…MWWRGCKIKA (118 aa)) the chain is Cytoplasmic. A phosphoserine mark is found at Ser-17 and Ser-30. In terms of domain architecture, v-SNARE coiled-coil homology spans 52–112 (KIKHVQNQVD…KQLRRQMWWR (61 aa)). A helical; Anchor for type IV membrane protein membrane pass occupies residues 119–139 (IMALAAAILLLMIIILIVVKF). Residues 140 to 141 (RT) are Vesicular-facing.

It belongs to the synaptobrevin family. As to quaternary structure, identified in a complex containing STX6, STX12, VAMP4 and VTI1A. Interacts with BAIAP3; this interaction is increased in the presence of calcium. In terms of processing, (Microbial infection) Targeted and hydrolyzed by C.botulinum neurotoxin type X (BoNT/X) which hydrolyzes the 87-Arg-|-Ser-88 bond and probably inhibits neurotransmitter release. It remains unknown whether BoNT/X is ever produced, or what organisms it targets.

The protein resides in the golgi apparatus. The protein localises to the trans-Golgi network membrane. Involved in the pathway that functions to remove an inhibitor (probably synaptotagmin-4) of calcium-triggered exocytosis during the maturation of secretory granules. May be a marker for this sorting pathway that is critical for remodeling the secretory response of granule. This is Vesicle-associated membrane protein 4 (Vamp4) from Mus musculus (Mouse).